Consider the following 485-residue polypeptide: Eukaryotic translation initiation factor 3 subunit E (485 aa).

Positions Asn219–Thr391 constitute a PCI domain. The segment at Gln444–Lys485 is disordered. Residues Lys451–Gly475 are compositionally biased toward basic and acidic residues. Residues Gly476–Lys485 are compositionally biased toward basic residues.

Belongs to the eIF-3 subunit E family. In terms of assembly, component of the eukaryotic translation initiation factor 3 (eIF-3) complex.

It localises to the cytoplasm. Component of the eukaryotic translation initiation factor 3 (eIF-3) complex, which is involved in protein synthesis of a specialized repertoire of mRNAs and, together with other initiation factors, stimulates binding of mRNA and methionyl-tRNAi to the 40S ribosome. The eIF-3 complex specifically targets and initiates translation of a subset of mRNAs involved in cell proliferation. This chain is Eukaryotic translation initiation factor 3 subunit E, found in Monosiga brevicollis (Choanoflagellate).